The sequence spans 314 residues: Formimidoylglutamase (314 aa).

6 residues coordinate Mn(2+): histidine 127, aspartate 153, histidine 155, aspartate 157, aspartate 245, and aspartate 247.

Belongs to the arginase family. Mn(2+) is required as a cofactor.

The enzyme catalyses N-formimidoyl-L-glutamate + H2O = formamide + L-glutamate. It participates in amino-acid degradation; L-histidine degradation into L-glutamate; L-glutamate from N-formimidoyl-L-glutamate (hydrolase route): step 1/1. Its function is as follows. Catalyzes the conversion of N-formimidoyl-L-glutamate to L-glutamate and formamide. This is Formimidoylglutamase from Aeromonas salmonicida (strain A449).